Consider the following 88-residue polypeptide: Small ribosomal subunit protein bS16 (88 aa).

The protein belongs to the bacterial ribosomal protein bS16 family.

This is Small ribosomal subunit protein bS16 from Leptospira interrogans serogroup Icterohaemorrhagiae serovar Lai (strain 56601).